The sequence spans 85 residues: N.vectensis toxin 1 4 (85 aa).

The first 20 residues, 1–20, serve as a signal peptide directing secretion; the sequence is MASFKIVIVCLALLVAVASA. A propeptide spanning residues 21–36 is cleaved from the precursor; sequence RRRDMMSDDELDYHYS. Cystine bridges form between Cys-42/Cys-82, Cys-44/Cys-72, and Cys-65/Cys-83.

This sequence belongs to the sea anemone sodium channel inhibitory toxin family. Type II subfamily. As to expression, expressed in ectodermal glands and in clumps outside of the extodermal layer. Is not expressed in nematocytes. In adult female tissues, shows similar expression levels in mesenteries (gametes-producing tissue), tentacles, pharynx and physa.

Its subcellular location is the secreted. Its function is as follows. Binds to site 3 of voltage-gated sodium channels and inhibits the inactivation process. Is highly active on DmNav1/TipE (drosophila) and is only extremely weakly active on rat Nav1.4-beta-1/SCN4A-SCN1B, and on human Nav1.5-beta-1/SCN5A-beta-1. This reveals high specificity for arthropod over mammalian channels. In vivo, when released into the medium, this recombinant toxin induces impaired swimming, paralysis and death of the crustacean A.nauplii within several hours. Also causes paralysis of cherry shrimps immediately after injection at very low doses. Its effect on zebrafish (D.rerio) larvae is also rapid, since it induces tail twitching accompanied by impaired swimming after 20 minutes and complete paralysis within 45 minutes. It has also been observed to cause death of zebrafish larvae within 1 hour. This is N.vectensis toxin 1 4 from Nematostella vectensis (Starlet sea anemone).